Consider the following 76-residue polypeptide: Exodeoxyribonuclease 7 small subunit (76 aa).

It belongs to the XseB family. Heterooligomer composed of large and small subunits.

It is found in the cytoplasm. The catalysed reaction is Exonucleolytic cleavage in either 5'- to 3'- or 3'- to 5'-direction to yield nucleoside 5'-phosphates.. In terms of biological role, bidirectionally degrades single-stranded DNA into large acid-insoluble oligonucleotides, which are then degraded further into small acid-soluble oligonucleotides. This Enterococcus faecalis (strain ATCC 700802 / V583) protein is Exodeoxyribonuclease 7 small subunit.